The primary structure comprises 189 residues: Calcium and integrin-binding family member 2 (189 aa).

EF-hand domains are found at residues arginine 68 to glutamine 103, proline 105 to asparagine 140, and glutamate 146 to phenylalanine 181. The Ca(2+) site is built by aspartate 118, aspartate 120, aspartate 122, aspartate 129, aspartate 159, aspartate 161, aspartate 163, lysine 165, and glutamate 170.

As to quaternary structure, monomer. Homodimer.

Its subcellular location is the cytoplasm. In terms of biological role, calcium- and integrin-binding protein. Plays a role in intracellular calcium homeostasis. Critical for proper photoreceptor cell maintenance and function. Required for prevention of light-dependent retinal degeneration. In Drosophila melanogaster (Fruit fly), this protein is Calcium and integrin-binding family member 2.